The chain runs to 229 residues: 3-dehydroquinate dehydratase (229 aa).

3-dehydroquinate is bound by residues 33–35 and R65; that span reads EWR. H121 acts as the Proton donor/acceptor in catalysis. The active-site Schiff-base intermediate with substrate is the K146. 3 residues coordinate 3-dehydroquinate: R188, S207, and Q211.

The protein belongs to the type-I 3-dehydroquinase family. As to quaternary structure, homodimer.

It catalyses the reaction 3-dehydroquinate = 3-dehydroshikimate + H2O. It functions in the pathway metabolic intermediate biosynthesis; chorismate biosynthesis; chorismate from D-erythrose 4-phosphate and phosphoenolpyruvate: step 3/7. Functionally, involved in the third step of the chorismate pathway, which leads to the biosynthesis of aromatic amino acids. Catalyzes the cis-dehydration of 3-dehydroquinate (DHQ) and introduces the first double bond of the aromatic ring to yield 3-dehydroshikimate. The polypeptide is 3-dehydroquinate dehydratase (Lactococcus lactis subsp. cremoris (strain MG1363)).